Here is a 639-residue protein sequence, read N- to C-terminus: Chaperone protein DnaK (639 aa).

Thr199 carries the post-translational modification Phosphothreonine; by autocatalysis. A compositionally biased stretch (low complexity) spans 602–613 (AQAQQAAAGAEG). The disordered stretch occupies residues 602-639 (AQAQQAAAGAEGQPEDASAKQDDDVVDAEFEEVKDDKK). A compositionally biased stretch (acidic residues) spans 625–639 (DVVDAEFEEVKDDKK).

It belongs to the heat shock protein 70 family.

Acts as a chaperone. The chain is Chaperone protein DnaK from Pseudoalteromonas atlantica (strain T6c / ATCC BAA-1087).